A 100-amino-acid polypeptide reads, in one-letter code: Sec-independent protein translocase protein TatA (100 aa).

Residues 1–21 traverse the membrane as a helical segment; it reads MGALRPWHIAVLVVVLILLFG. Positions 46-58 are enriched in basic and acidic residues; that stretch reads LHDDDRDLAEKAD. The interval 46 to 100 is disordered; that stretch reads LHDDDRDLAEKADAQAGYQPMPPQVQQGQHPQQSPYPAPPQQQPVVDPVQRTRDS. Residues 69-78 are compositionally biased toward low complexity; sequence QVQQGQHPQQ.

The protein belongs to the TatA/E family. In terms of assembly, the Tat system comprises two distinct complexes: a TatABC complex, containing multiple copies of TatA, TatB and TatC subunits, and a separate TatA complex, containing only TatA subunits. Substrates initially bind to the TatABC complex, which probably triggers association of the separate TatA complex to form the active translocon.

The protein localises to the cell membrane. Functionally, part of the twin-arginine translocation (Tat) system that transports large folded proteins containing a characteristic twin-arginine motif in their signal peptide across membranes. TatA could form the protein-conducting channel of the Tat system. In Salinispora tropica (strain ATCC BAA-916 / DSM 44818 / JCM 13857 / NBRC 105044 / CNB-440), this protein is Sec-independent protein translocase protein TatA.